A 214-amino-acid chain; its full sequence is Large ribosomal subunit protein uL3 (214 aa).

Residues 133-155 are disordered; it reads ATHGNSRSHRVPGSTGQCQSPGR. Glutamine 151 is modified (N5-methylglutamine).

Belongs to the universal ribosomal protein uL3 family. As to quaternary structure, part of the 50S ribosomal subunit. Forms a cluster with proteins L14 and L19. In terms of processing, methylated by PrmB.

Functionally, one of the primary rRNA binding proteins, it binds directly near the 3'-end of the 23S rRNA, where it nucleates assembly of the 50S subunit. The protein is Large ribosomal subunit protein uL3 of Cellvibrio japonicus (strain Ueda107) (Pseudomonas fluorescens subsp. cellulosa).